Reading from the N-terminus, the 104-residue chain is Large ribosomal subunit protein bL21 (104 aa).

It belongs to the bacterial ribosomal protein bL21 family. Part of the 50S ribosomal subunit. Contacts protein L20.

In terms of biological role, this protein binds to 23S rRNA in the presence of protein L20. The chain is Large ribosomal subunit protein bL21 from Moorella thermoacetica (strain ATCC 39073 / JCM 9320).